The sequence spans 221 residues: NEDD4 family-interacting protein 1 (221 aa).

Position 2 is an N-acetylalanine (alanine 2). An interaction with UBE2L3 region spans residues 2-41 (ALALAALAAVEPACGSRYQQLQNEEESGEPEQAAGDAPPP). The Cytoplasmic segment spans residues 2–116 (ALALAALAAV…ADQLRIGNDG (115 aa)). The disordered stretch occupies residues 18–45 (RYQQLQNEEESGEPEQAAGDAPPPYSSI). 3 consecutive short sequence motifs (PPxY motif) follow at residues 39–42 (PPPY), 64–67 (PPSY), and 74–76 (PSY). Positions 42–76 (YSSISAESAAYFDYKDESGFPKPPSYNVATTLPSY) are interaction with ITCH. A helical membrane pass occupies residues 117–137 (IFMLTFFMAFLFNWIGFFLSF). The Extracellular segment spans residues 138-143 (CLTTSA). A helical membrane pass occupies residues 144–164 (AGRYGAISGFGLSLIKWILIV). Residues 165–172 (RFSTYFPG) lie on the Cytoplasmic side of the membrane. The chain crosses the membrane as a helical span at residues 173–193 (YFDGQYWLWWVFLVLGFLLFL). Over 194-221 (RGFINYAKVRKMPETFSNLPRTRVLFIY) the chain is Extracellular.

In terms of assembly, forms heterodimers with NDFIP2. Interacts with several E3 ubiquitin-protein ligases, including ITCH, NEDD4, NEDD4L and WWP2. The interaction with NEDD4, NEDD4L and ITCH leads to relocalization of these proteins to exosomes and eventually to exosomal secretion. Interacts with U2SURP. Interacts with SLC11A2/DMT1. Interacts with PTEN. May interact with phosphorylated EGFR. Interacts with BRAT1. Interacts with KCNH2. Interacts with MAVS. Part of a complex containing ITCH, NDFIP1 and MAP3K7. Interacts (via N-terminus) with UBE2L3; the interaction mediates recruitment of UBE2L3 to ITCH. In terms of processing, ubiquitinated by NEDD4 and ITCH; mono-, di- and polyubiquitinated forms are detected. Ubiquitination regulates its degradation. Post-translationally, undergoes transient tyrosine phosphorylation following EGF stimulation, most probably by catalyzed by SRC. Phosphorylation SRC is enhanced in the presence of NDFIP2 which may act as a scaffold to recruit SRC to NDFIP1. In terms of tissue distribution, widely expressed. Higher levels are detected in cerebellum, pituitary, thalamus, kidney, liver, testis, salivary glands and placenta. Also expressed in fetal brain, kidney and lung.

The protein resides in the endosome membrane. The protein localises to the golgi apparatus membrane. It is found in the synapse. Its subcellular location is the synaptosome. It localises to the cell projection. The protein resides in the dendrite. The protein localises to the secreted. In terms of biological role, activates HECT domain-containing E3 ubiquitin-protein ligases, including NEDD4 and ITCH, and consequently modulates the stability of their targets. As a result, controls many cellular processes. Prevents chronic T-helper cell-mediated inflammation by activating ITCH and thus controlling JUNB degradation. Promotes pancreatic beta cell death through degradation of JUNB and inhibition of the unfolded protein response, leading to reduction of insulin secretion. Restricts the production of pro-inflammatory cytokines in effector Th17 T-cells by promoting ITCH-mediated ubiquitination and degradation of RORC. Together with NDFIP2, limits the cytokine signaling and expansion of effector Th2 T-cells by promoting degradation of JAK1, probably by ITCH- and NEDD4L-mediated ubiquitination. Regulates peripheral T-cell tolerance to self and foreign antigens, forcing the exit of naive CD4+ T-cells from the cell cycle before they become effector T-cells. Negatively regulates RLR-mediated antiviral response by promoting SMURF1-mediated ubiquitination and subsequent degradation of MAVS. Negatively regulates KCNH2 potassium channel activity by decreasing its cell-surface expression and interfering with channel maturation through recruitment of NEDD4L to the Golgi apparatus where it mediates KCNH2 degradation. In cortical neurons, mediates the ubiquitination of the divalent metal transporter SLC11A2/DMT1 by NEDD4L, leading to its down-regulation and protection of the cells from cobalt and iron toxicity. Important for normal development of dendrites and dendritic spines in cortex. Enhances the ubiquitination of BRAT1 mediated by: NEDD4, NEDD4L and ITCH and is required for the nuclear localization of ubiquitinated BRAT1. Enhances the ITCH-mediated ubiquitination of MAP3K7 by recruiting E2 ubiquitin-conjugating enzyme UBE2L3 to ITCH. Modulates EGFR signaling through multiple pathways. In particular, may regulate the ratio of AKT1-to-MAPK8 signaling in response to EGF, acting on AKT1 probably through PTEN destabilization and on MAPK8 through ITCH-dependent MAP2K4 inactivation. As a result, may control cell growth rate. Inhibits cell proliferation by promoting PTEN nuclear localization and changing its signaling specificity. The chain is NEDD4 family-interacting protein 1 (NDFIP1) from Homo sapiens (Human).